Here is a 433-residue protein sequence, read N- to C-terminus: Adenylosuccinate synthetase (433 aa).

GTP contacts are provided by residues 11-17 (GDEGKGK) and 39-41 (GHT). The active-site Proton acceptor is D12. Residues D12 and G39 each coordinate Mg(2+). Residues 12 to 15 (DEGK), 37 to 40 (NAGH), T134, R148, N230, T245, and R309 contribute to the IMP site. H40 acts as the Proton donor in catalysis. Residue 305–311 (VTTGRKR) coordinates substrate. Residues R311, 337–339 (KLD), and 419–421 (GTG) each bind GTP.

Belongs to the adenylosuccinate synthetase family. As to quaternary structure, homodimer. Requires Mg(2+) as cofactor.

It is found in the cytoplasm. The enzyme catalyses IMP + L-aspartate + GTP = N(6)-(1,2-dicarboxyethyl)-AMP + GDP + phosphate + 2 H(+). Its pathway is purine metabolism; AMP biosynthesis via de novo pathway; AMP from IMP: step 1/2. Functionally, plays an important role in the de novo pathway and in the salvage pathway of purine nucleotide biosynthesis. Catalyzes the first committed step in the biosynthesis of AMP from IMP. The sequence is that of Adenylosuccinate synthetase from Eremothecium gossypii (strain ATCC 10895 / CBS 109.51 / FGSC 9923 / NRRL Y-1056) (Yeast).